A 185-amino-acid chain; its full sequence is Ribosome maturation factor RimM (185 aa).

Positions 106-185 (SGEYYWKDLL…IIEVDWDPGF (80 aa)) constitute a PRC barrel domain.

Belongs to the RimM family. As to quaternary structure, binds ribosomal protein uS19.

The protein resides in the cytoplasm. Its function is as follows. An accessory protein needed during the final step in the assembly of 30S ribosomal subunit, possibly for assembly of the head region. Essential for efficient processing of 16S rRNA. May be needed both before and after RbfA during the maturation of 16S rRNA. It has affinity for free ribosomal 30S subunits but not for 70S ribosomes. This chain is Ribosome maturation factor RimM, found in Sodalis glossinidius (strain morsitans).